The sequence spans 158 residues: Ribosome-binding factor A (158 aa).

The segment at 130–158 (TAQYAGDADPYKHDDEAEAEGDEFESDEE) is disordered. Acidic residues predominate over residues 145 to 158 (EAEAEGDEFESDEE).

Belongs to the RbfA family. As to quaternary structure, monomer. Binds 30S ribosomal subunits, but not 50S ribosomal subunits or 70S ribosomes.

It localises to the cytoplasm. One of several proteins that assist in the late maturation steps of the functional core of the 30S ribosomal subunit. Associates with free 30S ribosomal subunits (but not with 30S subunits that are part of 70S ribosomes or polysomes). Required for efficient processing of 16S rRNA. May interact with the 5'-terminal helix region of 16S rRNA. The sequence is that of Ribosome-binding factor A from Bifidobacterium longum subsp. infantis (strain ATCC 15697 / DSM 20088 / JCM 1222 / NCTC 11817 / S12).